The primary structure comprises 515 residues: 2-isopropylmalate synthase (515 aa).

The 263-residue stretch at 5 to 267 (VIIFDTTLRD…DTHINTQEIH (263 aa)) folds into the Pyruvate carboxyltransferase domain. Residues Asp-14, His-202, His-204, and Asn-238 each contribute to the Mn(2+) site. Residues 392 to 515 (VLDKLSAHST…VADIKNHKHH (124 aa)) form a regulatory domain region.

The protein belongs to the alpha-IPM synthase/homocitrate synthase family. LeuA type 1 subfamily. As to quaternary structure, homodimer. Mn(2+) serves as cofactor.

It is found in the cytoplasm. The enzyme catalyses 3-methyl-2-oxobutanoate + acetyl-CoA + H2O = (2S)-2-isopropylmalate + CoA + H(+). It functions in the pathway amino-acid biosynthesis; L-leucine biosynthesis; L-leucine from 3-methyl-2-oxobutanoate: step 1/4. In terms of biological role, catalyzes the condensation of the acetyl group of acetyl-CoA with 3-methyl-2-oxobutanoate (2-ketoisovalerate) to form 3-carboxy-3-hydroxy-4-methylpentanoate (2-isopropylmalate). This is 2-isopropylmalate synthase from Haemophilus influenzae (strain ATCC 51907 / DSM 11121 / KW20 / Rd).